Consider the following 299-residue polypeptide: Taste receptor type 2 member 5 (299 aa).

A topological domain (extracellular) is located at residue Met-1. The helical transmembrane segment at 2–22 threads the bilayer; sequence LSAGLGLLMLVAVVEFLIGLI. At 23–45 the chain is on the cytoplasmic side; sequence GNGVLVVWSFREWIRKFSWSSYN. A helical membrane pass occupies residues 46–66; it reads LIILGLAGCRFVLQWLIILDL. Over 67–82 the chain is Extracellular; that stretch reads SLFPLFQSSRWLRYLS. Residues 83–103 form a helical membrane-spanning segment; sequence IFWVLVSQASLWFATFLSVFY. The Cytoplasmic segment spans residues 104 to 127; that stretch reads CKKITTFDHPAYLWLKQRAYNLSL. Residues 128–148 traverse the membrane as a helical segment; it reads WCLLGYFIINLLLTVQIGLMF. Residues 149–175 lie on the Extracellular side of the membrane; sequence YHPPQGNSSIRYPFESWQYLYAFRLNS. N-linked (GlcNAc...) asparagine glycosylation occurs at Asn-155. Residues 176–196 form a helical membrane-spanning segment; that stretch reads GSYLPLMVFLVSSGMLIVSLY. Topologically, residues 197–223 are cytoplasmic; it reads THHKKMKVHSAGRRDVRAKAHITALKS. The chain crosses the membrane as a helical span at residues 224–244; sequence LGCFLLLHLVYIMASPFSIAS. Residues 245-253 are Extracellular-facing; the sequence is KTYPPDLTS. Residues 254–274 traverse the membrane as a helical segment; that stretch reads VFIWETLMAAYPSLHSLILIM. At 275 to 299 the chain is on the cytoplasmic side; sequence GIPRVKQTCQKILWKTVCARRCWGP.

This sequence belongs to the G-protein coupled receptor T2R family.

Its subcellular location is the membrane. Its function is as follows. Receptor that may play a role in the perception of bitterness and is gustducin-linked. May play a role in sensing the chemical composition of the gastrointestinal content. The activity of this receptor may stimulate alpha gustducin, mediate PLC-beta-2 activation and lead to the gating of TRPM5. The polypeptide is Taste receptor type 2 member 5 (TAS2R5) (Pan paniscus (Pygmy chimpanzee)).